The following is a 172-amino-acid chain: 3-hydroxydecanoyl-[acyl-carrier-protein] dehydratase (172 aa).

Histidine 71 is an active-site residue.

The protein belongs to the thioester dehydratase family. FabA subfamily. As to quaternary structure, homodimer.

Its subcellular location is the cytoplasm. The catalysed reaction is a (3R)-hydroxyacyl-[ACP] = a (2E)-enoyl-[ACP] + H2O. The enzyme catalyses (3R)-hydroxydecanoyl-[ACP] = (2E)-decenoyl-[ACP] + H2O. It carries out the reaction (2E)-decenoyl-[ACP] = (3Z)-decenoyl-[ACP]. Its pathway is lipid metabolism; fatty acid biosynthesis. Functionally, necessary for the introduction of cis unsaturation into fatty acids. Catalyzes the dehydration of (3R)-3-hydroxydecanoyl-ACP to E-(2)-decenoyl-ACP and then its isomerization to Z-(3)-decenoyl-ACP. Can catalyze the dehydratase reaction for beta-hydroxyacyl-ACPs with saturated chain lengths up to 16:0, being most active on intermediate chain length. The sequence is that of 3-hydroxydecanoyl-[acyl-carrier-protein] dehydratase from Salmonella arizonae (strain ATCC BAA-731 / CDC346-86 / RSK2980).